The following is a 626-amino-acid chain: FAD-binding monooxygenase moxY (626 aa).

Over residues 1–23 (MAPFLSAHGESASSSSSSSPTPS) the composition is skewed to low complexity. The tract at residues 1 to 47 (MAPFLSAHGESASSSSSSSPTPSRHTRNQHVDYSTPGSTGYNIPQNT) is disordered. Residues 31-47 (VDYSTPGSTGYNIPQNT) are compositionally biased toward polar residues. FAD contacts are provided by residues 96–99 (TWLE), 108–109 (DI), and Tyr114. 106–108 (GCD) contributes to the NADP(+) binding site. Residues 243–249 (SGASSIQ) and 266–267 (RT) each bind NADP(+).

Belongs to the FAD-binding monooxygenase family. It depends on FAD as a cofactor.

The protein operates within mycotoxin biosynthesis. In terms of biological role, FAD-binding monooxygenase; part of the fragmented gene cluster that mediates the biosynthesis of dothistromin (DOTH), a polyketide toxin very similar in structure to the aflatoxin precursor, versicolorin B. The first step of the pathway is the conversion of acetate to norsolorinic acid (NOR) and requires the fatty acid synthase subunits hexA and hexB, as well as the polyketide synthase pksA. PksA combines a hexanoyl starter unit and 7 malonyl-CoA extender units to synthesize the precursor NOR. The hexanoyl starter unit is provided to the acyl-carrier protein (ACP) domain by the fungal fatty acid synthase hexA/hexB. The second step is the conversion of NOR to averantin (AVN) and requires the norsolorinic acid ketoreductase nor1, which catalyzes the dehydration of norsolorinic acid to form (1'S)-averantin. The cytochrome P450 monooxygenase avnA then catalyzes the hydroxylation of AVN to 5'hydroxyaverantin (HAVN). The next step is performed by adhA that transforms HAVN to averufin (AVF). Averufin might then be converted to hydroxyversicolorone by cypX and avfA. Hydroxyversicolorone is further converted versiconal hemiacetal acetate (VHA) by moxY. VHA is then the substrate for the versiconal hemiacetal acetate esterase est1 to yield versiconal (VAL). Versicolorin B synthase vbsA then converts VAL to versicolorin B (VERB) by closing the bisfuran ring. Then, the activity of the versicolorin B desaturase verB leads to versicolorin A (VERA). DotB, a predicted chloroperoxidase, may perform epoxidation of the A-ring of VERA. Alternatively, a cytochrome P450, such as cypX or avnA could catalyze this step. It is also possible that another, uncharacterized, cytochrome P450 enzyme is responsible for this step. Opening of the epoxide could potentially be achieved by the epoxide hydrolase epoA. However, epoA seems not to be required for DOTH biosynthesis, but other epoxide hydrolases may have the ability to complement this hydrolysis. Alternatively, opening of the epoxide ring could be achieved non-enzymatically. The next step is the deoxygenation of ring A to yield the 5,8-dihydroxyanthraquinone which is most likely catalyzed by the NADPH dehydrogenase encoded by ver1. The last stages of DOTH biosynthesis are proposed to involve hydroxylation of the bisfuran. OrdB and norB might have oxidative roles here. An alternative possibility is that cytochrome P450 monoogenases such as avnA and cypX might perform these steps in addition to previously proposed steps. The sequence is that of FAD-binding monooxygenase moxY from Dothistroma septosporum (Red band needle blight fungus).